The chain runs to 242 residues: Histone-lysine N-methyltransferase set-1 (242 aa).

Residues 1-61 (MKVAAKKLAT…TRSRKGVSVK (61 aa)) form a disordered region. Residues 30 to 43 (SENPSSLASHSSSS) are compositionally biased toward low complexity. The region spanning 104-226 (RLLEVYKDVV…QGEELLYDYG (123 aa)) is the SET domain. Residues 114-116 (KGR), Y159, and 186-187 (NH) each bind S-adenosyl-L-methionine.

Belongs to the class V-like SAM-binding methyltransferase superfamily. Histone-lysine methyltransferase family. PR/SET subfamily. In terms of tissue distribution, in embryos, it is expressed ubiquitously. In late embryos, it is expressed in hypodermal seam cells. In L3 and L4 larvae and thereafter, it is expressed in vulval precursor cells. In adult males, it is also expressed in 6 unidentified posterior cells.

It is found in the nucleus. Its subcellular location is the chromosome. It catalyses the reaction L-lysyl(20)-[histone H4] + S-adenosyl-L-methionine = N(6)-methyl-L-lysyl(20)-[histone H4] + S-adenosyl-L-homocysteine + H(+). In terms of biological role, histone methyltransferase that specifically monomethylates 'Lys-20' of histone H4 (H4K20me1). H4K20me1 is enriched on hermaphrodite X chromosomes and during mitosis. Involved in dosage compensation by repression of X-linked gene expression in hermaphrodites. Plays a role in growth and body fat regulation downstream of the TOR complex 2 pathway. This is Histone-lysine N-methyltransferase set-1 (set-1) from Caenorhabditis elegans.